The primary structure comprises 585 residues: Archaeosine synthase (585 aa).

Residues 516 to 584 (TKTVEIDGFV…IGVEIRHVEE (69 aa)) form the PUA domain.

The protein belongs to the archaeosine synthase type 1 family. In terms of assembly, homodimer.

It catalyses the reaction 7-cyano-7-carbaguanosine(15) in tRNA + L-glutamine + H2O = archaeosine(15) in tRNA + L-glutamate. The protein operates within tRNA modification; archaeosine-tRNA biosynthesis. Its function is as follows. Is responsible for the final step in the biosynthesis of archaeosine, a modified nucleoside present in the dihydrouridine loop (D-loop) of archaeal tRNA. Catalyzes the conversion of 7-cyano-7-deazaguanine (preQ0)-modified tRNA to archaeosine-tRNA, transforming a nitrile group to a formamidine group. The chain is Archaeosine synthase from Haloferax volcanii (strain ATCC 29605 / DSM 3757 / JCM 8879 / NBRC 14742 / NCIMB 2012 / VKM B-1768 / DS2) (Halobacterium volcanii).